The primary structure comprises 204 residues: Dual-action ribosomal maturation protein DarP (204 aa).

Disordered regions lie at residues 1 to 31 (MPPM…SKSQ) and 182 to 204 (GGAS…DDEA). The segment covering 186-204 (DSDDEAADDAGDDHDDDEA) has biased composition (acidic residues).

The protein belongs to the DarP family.

Its subcellular location is the cytoplasm. Member of a network of 50S ribosomal subunit biogenesis factors which assembles along the 30S-50S interface, preventing incorrect 23S rRNA structures from forming. Promotes peptidyl transferase center (PTC) maturation. This chain is Dual-action ribosomal maturation protein DarP, found in Burkholderia orbicola (strain MC0-3).